The chain runs to 265 residues: Tryptophan synthase alpha chain (265 aa).

Residues glutamate 49 and aspartate 60 each act as proton acceptor in the active site.

It belongs to the TrpA family. In terms of assembly, tetramer of two alpha and two beta chains.

It carries out the reaction (1S,2R)-1-C-(indol-3-yl)glycerol 3-phosphate + L-serine = D-glyceraldehyde 3-phosphate + L-tryptophan + H2O. It participates in amino-acid biosynthesis; L-tryptophan biosynthesis; L-tryptophan from chorismate: step 5/5. The alpha subunit is responsible for the aldol cleavage of indoleglycerol phosphate to indole and glyceraldehyde 3-phosphate. The polypeptide is Tryptophan synthase alpha chain (Desulfatibacillum aliphaticivorans).